The sequence spans 376 residues: Ribosomal RNA large subunit methyltransferase G (376 aa).

This sequence belongs to the methyltransferase superfamily. RlmG family.

The protein localises to the cytoplasm. The catalysed reaction is guanosine(1835) in 23S rRNA + S-adenosyl-L-methionine = N(2)-methylguanosine(1835) in 23S rRNA + S-adenosyl-L-homocysteine + H(+). Specifically methylates the guanine in position 1835 (m2G1835) of 23S rRNA. In Cronobacter sakazakii (strain ATCC BAA-894) (Enterobacter sakazakii), this protein is Ribosomal RNA large subunit methyltransferase G.